The sequence spans 334 residues: MKFVDSASVRIEAGKGGAGCLGFRRERYISDGGPDGGDGGDGGHVYFQGQDGLNTLSEFCFKRLFRAKNGQPGSGQNKRGKSAQHLTVEIPLGTKVYDLVTDELIGEMTKHEQTILVAKGGFHGLGNTRFKSSINRAPRETTPGFPGEVREIGLELSVMADIGLLGIPNAGKSSLIRQISSARPKIADYPFTTLHPSLSVVSFCDKHIVMADIPGLIENASKGAGLGFKFLKHLSRAKVLLHVVDILPVDGSDPVKNFLTIEKELKKYDQELANKEKLLVINKIDLLPEKDRNTMVQSLLKDICYKGKVFNISALNGLGCKDLVAGLFKLVLRK.

The Obg domain maps to 1–159 (MKFVDSASVR…REIGLELSVM (159 aa)). Positions 160–332 (ADIGLLGIPN…LVAGLFKLVL (173 aa)) constitute an OBG-type G domain. GTP-binding positions include 166–173 (GIPNAGKS), 191–195 (FTTLH), 212–215 (DIPG), 282–285 (NKID), and 313–315 (SAL). Mg(2+) contacts are provided by serine 173 and threonine 193.

This sequence belongs to the TRAFAC class OBG-HflX-like GTPase superfamily. OBG GTPase family. In terms of assembly, monomer. Mg(2+) serves as cofactor.

The protein resides in the cytoplasm. Functionally, an essential GTPase which binds GTP, GDP and possibly (p)ppGpp with moderate affinity, with high nucleotide exchange rates and a fairly low GTP hydrolysis rate. Plays a role in control of the cell cycle, stress response, ribosome biogenesis and in those bacteria that undergo differentiation, in morphogenesis control. In Vesicomyosocius okutanii subsp. Calyptogena okutanii (strain HA), this protein is GTPase Obg.